A 247-amino-acid chain; its full sequence is MGYNRALRYSKHEGTTCVIDNQHYKSLGAVLKDVKHKKDRLREAEIEPVLDIADQYMVTEDPFRGPGKNVRITLFKECRRVEPDTLKLVCNWSGKEFLREMWTRFISEEFPITTDQQIMNMWFEIQVRPMQPNRCYKFTMQYALDAHPDYVPHDVIRAQDPYYIGPNNIERINLKKGFAFPLMCLQSVYNDNFETFFEDVLWPYFHRPLVYIGTTSSETEEILLEVSFLFKIKEFAPDVPLYTGPAY.

It belongs to the polyhedrin family.

Component of the virus occlusion bodies, which are large proteinaceous structures, that protect the virus from the outside environment for extended periods until they are ingested by insect larvae. The sequence is that of Granulin from Pieris brassicae granulosis virus (PbGV).